The chain runs to 294 residues: Phosphatidylserine decarboxylase proenzyme (294 aa).

Residues Asp-100, His-157, and Ser-261 each act as charge relay system; for autoendoproteolytic cleavage activity in the active site. Ser-261 (schiff-base intermediate with substrate; via pyruvic acid; for decarboxylase activity) is an active-site residue. Ser-261 bears the Pyruvic acid (Ser); by autocatalysis mark.

The protein belongs to the phosphatidylserine decarboxylase family. PSD-B subfamily. Prokaryotic type I sub-subfamily. As to quaternary structure, heterodimer of a large membrane-associated beta subunit and a small pyruvoyl-containing alpha subunit. The cofactor is pyruvate. In terms of processing, is synthesized initially as an inactive proenzyme. Formation of the active enzyme involves a self-maturation process in which the active site pyruvoyl group is generated from an internal serine residue via an autocatalytic post-translational modification. Two non-identical subunits are generated from the proenzyme in this reaction, and the pyruvate is formed at the N-terminus of the alpha chain, which is derived from the carboxyl end of the proenzyme. The autoendoproteolytic cleavage occurs by a canonical serine protease mechanism, in which the side chain hydroxyl group of the serine supplies its oxygen atom to form the C-terminus of the beta chain, while the remainder of the serine residue undergoes an oxidative deamination to produce ammonia and the pyruvoyl prosthetic group on the alpha chain. During this reaction, the Ser that is part of the protease active site of the proenzyme becomes the pyruvoyl prosthetic group, which constitutes an essential element of the active site of the mature decarboxylase.

The protein resides in the cell membrane. The enzyme catalyses a 1,2-diacyl-sn-glycero-3-phospho-L-serine + H(+) = a 1,2-diacyl-sn-glycero-3-phosphoethanolamine + CO2. It functions in the pathway phospholipid metabolism; phosphatidylethanolamine biosynthesis; phosphatidylethanolamine from CDP-diacylglycerol: step 2/2. Catalyzes the formation of phosphatidylethanolamine (PtdEtn) from phosphatidylserine (PtdSer). The protein is Phosphatidylserine decarboxylase proenzyme of Histophilus somni (strain 2336) (Haemophilus somnus).